The sequence spans 319 residues: Putative G-protein coupled receptor B0244.7 (319 aa).

The N-linked (GlcNAc...) asparagine glycan is linked to N28. The next 6 membrane-spanning stretches (helical) occupy residues 49-69, 107-127, 131-151, 166-186, 206-226, and 261-281; these read AIFIIPCCMSFFALFLNIYIF, LPVIIFLTHFNFWVIALFIIF, SFLSFIGGMVGTTLTIYIAVV, VLLILLLWVSAITVAISCGIV, GPVLIFGIVCIATAFSICLVI, and LFAGFFVFATMAIFEIASAII.

This sequence belongs to the G-protein coupled receptor 1 family. B0244 subfamily.

It localises to the cell membrane. This is Putative G-protein coupled receptor B0244.7 from Caenorhabditis elegans.